Here is a 247-residue protein sequence, read N- to C-terminus: MRNIKLIIEYDGTAYCGWQVQPNGRTVQEALEEALASMLGGKTALHGSGRTDAGVHARGMVACFQTDKGMPLRAFREGLNCLLPADIAVREACEVPLEFHPRFDALAKHYRYTMLLDDLRSPLSRLTAWRLKGKLDVDAMRSACAAFVGEHDFAAFRASNCAAKTTVRRIYSMDLVQEGPFLHLDVKGSGFLKNMVRIITGTLIEVGQGKKSVEDVARLLKGSDRQQNSGMTVPPQGLCLMQVYYPE.

Catalysis depends on D52, which acts as the Nucleophile. Y110 contacts substrate.

Belongs to the tRNA pseudouridine synthase TruA family. In terms of assembly, homodimer.

The enzyme catalyses uridine(38/39/40) in tRNA = pseudouridine(38/39/40) in tRNA. Formation of pseudouridine at positions 38, 39 and 40 in the anticodon stem and loop of transfer RNAs. This is tRNA pseudouridine synthase A from Geobacter sp. (strain M21).